The primary structure comprises 260 residues: Vesicle-associated membrane protein 7B (260 aa).

Over 1–189 (MPIIYSLVAR…KCAMWWKNVK (189 aa)) the chain is Cytoplasmic. The region spanning 7-110 (LVARGSSVLA…GMNSDFSRTL (104 aa)) is the Longin domain. The region spanning 125 to 186 (TMSRTMAEID…KQLKCAMWWK (62 aa)) is the v-SNARE coiled-coil homology domain. The chain crosses the membrane as a helical; Anchor for type IV membrane protein span at residues 190-210 (LMLVLGAIVLIIIFIIVMSYC). Over 211 to 260 (DGFRSGSKCRSSPSSNSTPTPTPTETPTPTPTPTSTPTPSQLLETLLNQF) the chain is Vesicular. The disordered stretch occupies residues 215–250 (SGSKCRSSPSSNSTPTPTPTETPTPTPTPTSTPTPS). Positions 230 to 246 (TPTPTETPTPTPTPTST) are enriched in pro residues.

Belongs to the synaptobrevin family.

The protein localises to the cytoplasmic vesicle. It is found in the secretory vesicle membrane. Its subcellular location is the golgi apparatus. It localises to the trans-Golgi network membrane. The protein resides in the late endosome membrane. The protein localises to the lysosome membrane. It is found in the endoplasmic reticulum membrane. Its subcellular location is the phagosome membrane. Involved in the targeting and/or fusion of transport vesicles to their target membrane during transport of proteins from the early endosome to the lysosome. Required for heterotypic fusion of late endosomes with lysosomes and homotypic lysosomal fusion. This chain is Vesicle-associated membrane protein 7B, found in Dictyostelium discoideum (Social amoeba).